A 21-amino-acid chain; its full sequence is Ocellatin-4 (21 aa).

Ile-21 carries the isoleucine amide modification.

In terms of tissue distribution, expressed by the skin dorsal glands.

The protein resides in the secreted. In terms of biological role, has hemolytic activity against human erythrocytes (HC50=14.3 uM). Has antibacterial activity against the Gram-positive bacterium S.aureus ATCC 25923 (MIC=64 uM) and the Gram-negative bacterium E.coli ATCC 25922 (MIC=64 uM). The sequence is that of Ocellatin-4 from Leptodactylus ocellatus (Argus frog).